We begin with the raw amino-acid sequence, 189 residues long: Riboflavin kinase (189 aa).

Mg(2+) contacts are provided by Thr-42 and Asn-44. The active-site Nucleophile is the Glu-124.

It belongs to the flavokinase family. Zn(2+) is required as a cofactor. Mg(2+) serves as cofactor.

It carries out the reaction riboflavin + ATP = FMN + ADP + H(+). Its pathway is cofactor biosynthesis; FMN biosynthesis; FMN from riboflavin (ATP route): step 1/1. Its function is as follows. Catalyzes the phosphorylation of riboflavin (vitamin B2) to form flavin mononucleotide (FMN) coenzyme. The protein is Riboflavin kinase (FMN1) of Candida glabrata (strain ATCC 2001 / BCRC 20586 / JCM 3761 / NBRC 0622 / NRRL Y-65 / CBS 138) (Yeast).